Reading from the N-terminus, the 734-residue chain is Photosystem I P700 chlorophyll a apoprotein A2 (734 aa).

A run of 8 helical transmembrane segments spans residues 46 to 69, 135 to 158, 175 to 199, 273 to 291, 330 to 353, 369 to 395, 417 to 439, and 517 to 535; these read IFAS…FHVA, LYQG…LHLQ, LNHH…HVAI, IAHH…GHQY, LHFQ…QHMY, AALY…IFFI, AIIS…LYVH, and FLVH…LILV. [4Fe-4S] cluster is bound by residues C559 and C568. A run of 2 helical transmembrane segments spans residues 575–596 and 643–665; these read AFYL…YWHW and LSVW…MFLI. The chlorophyll a site is built by H654, M662, and Y670. Position 671 (W671) interacts with phylloquinone. Residues 707–727 form a helical membrane-spanning segment; that stretch reads LVGLAHFSVGYIFTYAAFLIA.

This sequence belongs to the PsaA/PsaB family. As to quaternary structure, the PsaA/B heterodimer binds the P700 chlorophyll special pair and subsequent electron acceptors. PSI consists of a core antenna complex that captures photons, and an electron transfer chain that converts photonic excitation into a charge separation. The eukaryotic PSI reaction center is composed of at least 11 subunits. Requires P700 is a chlorophyll a/chlorophyll a' dimer, A0 is one or more chlorophyll a, A1 is one or both phylloquinones and FX is a shared 4Fe-4S iron-sulfur center. as cofactor.

The protein localises to the plastid. It is found in the chloroplast thylakoid membrane. It carries out the reaction reduced [plastocyanin] + hnu + oxidized [2Fe-2S]-[ferredoxin] = oxidized [plastocyanin] + reduced [2Fe-2S]-[ferredoxin]. PsaA and PsaB bind P700, the primary electron donor of photosystem I (PSI), as well as the electron acceptors A0, A1 and FX. PSI is a plastocyanin-ferredoxin oxidoreductase, converting photonic excitation into a charge separation, which transfers an electron from the donor P700 chlorophyll pair to the spectroscopically characterized acceptors A0, A1, FX, FA and FB in turn. Oxidized P700 is reduced on the lumenal side of the thylakoid membrane by plastocyanin. This chain is Photosystem I P700 chlorophyll a apoprotein A2, found in Chaetosphaeridium globosum (Charophycean green alga).